A 35-amino-acid polypeptide reads, in one-letter code: Photosystem II reaction center protein T (35 aa).

Residues 3-23 (ALVYTFLLISTLGIIFFAIFF) form a helical membrane-spanning segment.

Belongs to the PsbT family. PSII is composed of 1 copy each of membrane proteins PsbA, PsbB, PsbC, PsbD, PsbE, PsbF, PsbH, PsbI, PsbJ, PsbK, PsbL, PsbM, PsbT, PsbY, PsbZ, Psb30/Ycf12, at least 3 peripheral proteins of the oxygen-evolving complex and a large number of cofactors. It forms dimeric complexes.

It localises to the plastid. It is found in the chloroplast thylakoid membrane. Its function is as follows. Found at the monomer-monomer interface of the photosystem II (PS II) dimer, plays a role in assembly and dimerization of PSII. PSII is a light-driven water plastoquinone oxidoreductase, using light energy to abstract electrons from H(2)O, generating a proton gradient subsequently used for ATP formation. The chain is Photosystem II reaction center protein T from Aristolochia macrophylla (Dutchman's pipe vine).